The primary structure comprises 143 residues: Large ribosomal subunit protein uL15 (143 aa).

The tract at residues M1–P56 is disordered. Over residues R21–A31 the composition is skewed to gly residues.

The protein belongs to the universal ribosomal protein uL15 family. Part of the 50S ribosomal subunit.

Its function is as follows. Binds to the 23S rRNA. The sequence is that of Large ribosomal subunit protein uL15 from Delftia acidovorans (strain DSM 14801 / SPH-1).